The primary structure comprises 245 residues: Probable phosphatase Ent638_1550 (245 aa).

9 residues coordinate Zn(2+): His7, His9, His15, His40, Glu73, His101, His131, Asp192, and His194.

Belongs to the PHP family. As to quaternary structure, homotrimer. It depends on Zn(2+) as a cofactor.

The protein is Probable phosphatase Ent638_1550 of Enterobacter sp. (strain 638).